The primary structure comprises 544 residues: Chaperonin GroEL (544 aa).

ATP-binding positions include 29–32, lysine 50, 86–90, glycine 413, 479–481, and aspartate 495; these read TLGP, DGTTT, and DAA.

It belongs to the chaperonin (HSP60) family. In terms of assembly, forms a cylinder of 14 subunits composed of two heptameric rings stacked back-to-back. Interacts with the co-chaperonin GroES.

It is found in the cytoplasm. The enzyme catalyses ATP + H2O + a folded polypeptide = ADP + phosphate + an unfolded polypeptide.. Its function is as follows. Together with its co-chaperonin GroES, plays an essential role in assisting protein folding. The GroEL-GroES system forms a nano-cage that allows encapsulation of the non-native substrate proteins and provides a physical environment optimized to promote and accelerate protein folding. The chain is Chaperonin GroEL from Borrelia duttonii (strain Ly).